We begin with the raw amino-acid sequence, 131 residues long: Translation initiation factor 5A (131 aa).

Lys-36 carries the hypusine modification.

The protein belongs to the eIF-5A family.

The protein resides in the cytoplasm. In terms of biological role, functions by promoting the formation of the first peptide bond. The chain is Translation initiation factor 5A (eIF5A) from Metallosphaera sedula (strain ATCC 51363 / DSM 5348 / JCM 9185 / NBRC 15509 / TH2).